A 387-amino-acid polypeptide reads, in one-letter code: BTB and MATH domain-containing protein 38 (387 aa).

Residues 79-204 (EGMLKLEIPN…NEMVTVTARV (126 aa)) form the MATH domain. Residues 228-295 (CDMTLVINKQ…IYPCHKPITS (68 aa)) enclose the BTB domain.

The protein is BTB and MATH domain-containing protein 38 (bath-38) of Caenorhabditis elegans.